The primary structure comprises 465 residues: Lipase 10 (465 aa).

Residues 1 to 16 form the signal peptide; the sequence is MKTLLIFLAFLSSIFA. C112 and C285 form a disulfide bridge. S196 functions as the Charge relay system in the catalytic mechanism. N-linked (GlcNAc...) asparagine glycans are attached at residues N231 and N319. Catalysis depends on charge relay system residues D348 and H381. A disulfide bridge links C364 with C409.

Belongs to the AB hydrolase superfamily. Lipase family. Class Lip subfamily.

The protein localises to the secreted. The catalysed reaction is a triacylglycerol + H2O = a diacylglycerol + a fatty acid + H(+). Its function is as follows. Secreted lipase that is able to hydrolyze both the neutral triacylglycerols and the monopalmitate ester Tween 40, allowing the use of hydrolyzed products as carbon sources. Has broad lipolytic activity, which may be important for colonization and subsequent infection, therefore contributing to the persistence and virulence in human tissue. The sequence is that of Lipase 10 from Candida albicans (strain SC5314 / ATCC MYA-2876) (Yeast).